Consider the following 366-residue polypeptide: Leucine dehydrogenase (366 aa).

Lys82 is an active-site residue. Position 182-188 (182-188) interacts with NAD(+); the sequence is GVGNVAY.

The protein belongs to the Glu/Leu/Phe/Val dehydrogenases family.

It carries out the reaction L-leucine + NAD(+) + H2O = 4-methyl-2-oxopentanoate + NH4(+) + NADH + H(+). It functions in the pathway amino-acid degradation; L-leucine degradation; 4-methyl-2-oxopentanoate from L-leucine (dehydrogenase route): step 1/1. Catalyzes the reversible deamination of L-leucine to 4-methyl-2-oxopentanoate. The chain is Leucine dehydrogenase (ldh) from Bacillus cereus.